A 170-amino-acid chain; its full sequence is Flavodoxin (170 aa).

Positions 4–165 (IGLFFGTQTG…RIQAWVAQLK (162 aa)) constitute a Flavodoxin-like domain.

It belongs to the flavodoxin family. The cofactor is FMN.

Functionally, low-potential electron donor to a number of redox enzymes. The chain is Flavodoxin (isiB) from Picosynechococcus sp. (strain ATCC 27264 / PCC 7002 / PR-6) (Agmenellum quadruplicatum).